The sequence spans 141 residues: Nucleoside diphosphate kinase (141 aa).

ATP is bound by residues lysine 11, phenylalanine 59, arginine 87, threonine 93, arginine 104, and asparagine 114. Catalysis depends on histidine 117, which acts as the Pros-phosphohistidine intermediate.

It belongs to the NDK family. In terms of assembly, homotetramer. Mg(2+) serves as cofactor.

Its subcellular location is the cytoplasm. The enzyme catalyses a 2'-deoxyribonucleoside 5'-diphosphate + ATP = a 2'-deoxyribonucleoside 5'-triphosphate + ADP. It carries out the reaction a ribonucleoside 5'-diphosphate + ATP = a ribonucleoside 5'-triphosphate + ADP. Major role in the synthesis of nucleoside triphosphates other than ATP. The ATP gamma phosphate is transferred to the NDP beta phosphate via a ping-pong mechanism, using a phosphorylated active-site intermediate. The polypeptide is Nucleoside diphosphate kinase (Neisseria meningitidis serogroup A / serotype 4A (strain DSM 15465 / Z2491)).